Here is a 119-residue protein sequence, read N- to C-terminus: uncharacterized protein (119 aa).

The protein localises to the mitochondrion. It is found in the nucleus. This is an uncharacterized protein from Schizosaccharomyces pombe (strain 972 / ATCC 24843) (Fission yeast).